The sequence spans 313 residues: Porphobilinogen deaminase (313 aa).

Position 242 is an S-(dipyrrolylmethanemethyl)cysteine (Cys242).

Belongs to the HMBS family. In terms of assembly, monomer. The cofactor is dipyrromethane.

It catalyses the reaction 4 porphobilinogen + H2O = hydroxymethylbilane + 4 NH4(+). The protein operates within porphyrin-containing compound metabolism; protoporphyrin-IX biosynthesis; coproporphyrinogen-III from 5-aminolevulinate: step 2/4. Tetrapolymerization of the monopyrrole PBG into the hydroxymethylbilane pre-uroporphyrinogen in several discrete steps. The polypeptide is Porphobilinogen deaminase (Escherichia coli O7:K1 (strain IAI39 / ExPEC)).